A 27-amino-acid chain; its full sequence is Nucleoside diphosphate kinase 2 (27 aa).

K3 provides a ligand contact to ATP.

The protein belongs to the NDK family. It depends on Mg(2+) as a cofactor.

It carries out the reaction a 2'-deoxyribonucleoside 5'-diphosphate + ATP = a 2'-deoxyribonucleoside 5'-triphosphate + ADP. It catalyses the reaction a ribonucleoside 5'-diphosphate + ATP = a ribonucleoside 5'-triphosphate + ADP. Functionally, major role in the synthesis of nucleoside triphosphates other than ATP. The ATP gamma phosphate is transferred to the NDP beta phosphate via a ping-pong mechanism, using a phosphorylated active-site intermediate. This Pseudotsuga menziesii (Douglas-fir) protein is Nucleoside diphosphate kinase 2.